Consider the following 293-residue polypeptide: Acetyl-coenzyme A carboxylase carboxyl transferase subunit beta (293 aa).

A CoA carboxyltransferase N-terminal domain is found at 29–293 (LWRKCPRCEG…MGWPPLALDD (265 aa)). Zn(2+) contacts are provided by Cys-33, Cys-36, Cys-52, and Cys-55. The C4-type zinc finger occupies 33–55 (CPRCEGVVYRPELDRNMDVCPKC).

This sequence belongs to the AccD/PCCB family. In terms of assembly, acetyl-CoA carboxylase is a heterohexamer composed of biotin carboxyl carrier protein (AccB), biotin carboxylase (AccC) and two subunits each of ACCase subunit alpha (AccA) and ACCase subunit beta (AccD). Zn(2+) serves as cofactor.

It is found in the cytoplasm. It catalyses the reaction N(6)-carboxybiotinyl-L-lysyl-[protein] + acetyl-CoA = N(6)-biotinyl-L-lysyl-[protein] + malonyl-CoA. The protein operates within lipid metabolism; malonyl-CoA biosynthesis; malonyl-CoA from acetyl-CoA: step 1/1. Its function is as follows. Component of the acetyl coenzyme A carboxylase (ACC) complex. Biotin carboxylase (BC) catalyzes the carboxylation of biotin on its carrier protein (BCCP) and then the CO(2) group is transferred by the transcarboxylase to acetyl-CoA to form malonyl-CoA. The protein is Acetyl-coenzyme A carboxylase carboxyl transferase subunit beta of Alcanivorax borkumensis (strain ATCC 700651 / DSM 11573 / NCIMB 13689 / SK2).